A 374-amino-acid chain; its full sequence is Chaperone protein DnaJ (374 aa).

Residues 5-70 form the J domain; the sequence is DYYDVLGVAK…DKRAAYDRFG (66 aa). The segment at 131-209 adopts a CR-type zinc-finger fold; that stretch reads GCEEKIRIPT…CHGQGRVQEY (79 aa). Zn(2+) contacts are provided by Cys-144, Cys-147, Cys-161, Cys-164, Cys-183, Cys-186, Cys-197, and Cys-200. CXXCXGXG motif repeat units lie at residues 144–151, 161–168, 183–190, and 197–204; these read CKTCDGSG, CGTCGGAG, CPECHGAG, and CRDCHGQG.

Belongs to the DnaJ family. Homodimer. Zn(2+) serves as cofactor.

The protein localises to the cytoplasm. Functionally, participates actively in the response to hyperosmotic and heat shock by preventing the aggregation of stress-denatured proteins and by disaggregating proteins, also in an autonomous, DnaK-independent fashion. Unfolded proteins bind initially to DnaJ; upon interaction with the DnaJ-bound protein, DnaK hydrolyzes its bound ATP, resulting in the formation of a stable complex. GrpE releases ADP from DnaK; ATP binding to DnaK triggers the release of the substrate protein, thus completing the reaction cycle. Several rounds of ATP-dependent interactions between DnaJ, DnaK and GrpE are required for fully efficient folding. Also involved, together with DnaK and GrpE, in the DNA replication of plasmids through activation of initiation proteins. This chain is Chaperone protein DnaJ, found in Marinomonas sp. (strain MWYL1).